Consider the following 143-residue polypeptide: Small ribosomal subunit protein bS6 (143 aa).

The tract at residues aspartate 97 to alanine 143 is disordered. The span at lysine 105 to aspartate 124 shows a compositional bias: basic and acidic residues.

Belongs to the bacterial ribosomal protein bS6 family.

Its function is as follows. Binds together with bS18 to 16S ribosomal RNA. This Xanthomonas oryzae pv. oryzae (strain MAFF 311018) protein is Small ribosomal subunit protein bS6.